The following is a 339-amino-acid chain: UDP-N-acetylenolpyruvoylglucosamine reductase (339 aa).

The FAD-binding PCMH-type domain occupies 19–189; that stretch reads VDVQARLFAE…LRVRFKLSRV (171 aa). The active site involves Arg166. Ser239 (proton donor) is an active-site residue. The active site involves Glu335.

It belongs to the MurB family. FAD serves as cofactor.

It is found in the cytoplasm. It carries out the reaction UDP-N-acetyl-alpha-D-muramate + NADP(+) = UDP-N-acetyl-3-O-(1-carboxyvinyl)-alpha-D-glucosamine + NADPH + H(+). It functions in the pathway cell wall biogenesis; peptidoglycan biosynthesis. In terms of biological role, cell wall formation. The polypeptide is UDP-N-acetylenolpyruvoylglucosamine reductase (Pseudomonas savastanoi pv. phaseolicola (strain 1448A / Race 6) (Pseudomonas syringae pv. phaseolicola (strain 1448A / Race 6))).